We begin with the raw amino-acid sequence, 1088 residues long: Receptor-type guanylate cyclase gcy-17 (1088 aa).

The first 20 residues, 1-20 (MLFLRLFIFTPFLILANCQA), serve as a signal peptide directing secretion. At 21-480 (RRTIKVGLLF…PPDFVRDYLV (460 aa)) the chain is on the extracellular side. N-linked (GlcNAc...) asparagine glycans are attached at residues N33, N235, N251, N321, N381, N419, and N434. A helical membrane pass occupies residues 481–501 (IVIIIVMFLIFAVSAAVGAVF). Topologically, residues 502–1088 (YAIRQKRKEI…SMARSITPEI (587 aa)) are cytoplasmic. The disordered stretch occupies residues 529–552 (SKKSKSEASQRSFASGPSTSTKLT). Positions 535–552 (EASQRSFASGPSTSTKLT) are enriched in polar residues. Residues 535–824 (EASQRSFASG…KGNLMDHVFN (290 aa)) form the Protein kinase domain. The stretch at 826-854 (LETYASTLEEEVNERTKELVEEQKKSDVL) forms a coiled coil. The Guanylate cyclase domain occupies 882–1012 (TIFFSDVVQF…DAVNTASRME (131 aa)). The interval 1069–1088 (SNMRKRENTPSMARSITPEI) is disordered.

The protein belongs to the adenylyl cyclase class-4/guanylyl cyclase family. Expressed in PHA sensory neurons.

The protein resides in the cell membrane. It carries out the reaction GTP = 3',5'-cyclic GMP + diphosphate. Functionally, guanylate cyclase involved in the production of the second messenger cGMP. The chain is Receptor-type guanylate cyclase gcy-17 from Caenorhabditis elegans.